We begin with the raw amino-acid sequence, 211 residues long: Protein-L-isoaspartate O-methyltransferase (211 aa).

Ser-60 is an active-site residue.

It belongs to the methyltransferase superfamily. L-isoaspartyl/D-aspartyl protein methyltransferase family.

The protein localises to the cytoplasm. The catalysed reaction is [protein]-L-isoaspartate + S-adenosyl-L-methionine = [protein]-L-isoaspartate alpha-methyl ester + S-adenosyl-L-homocysteine. Functionally, catalyzes the methyl esterification of L-isoaspartyl residues in peptides and proteins that result from spontaneous decomposition of normal L-aspartyl and L-asparaginyl residues. It plays a role in the repair and/or degradation of damaged proteins. In Pseudomonas savastanoi pv. phaseolicola (strain 1448A / Race 6) (Pseudomonas syringae pv. phaseolicola (strain 1448A / Race 6)), this protein is Protein-L-isoaspartate O-methyltransferase.